The following is a 131-amino-acid chain: Holo-[acyl-carrier-protein] synthase (131 aa).

Residues D8 and E59 each contribute to the Mg(2+) site.

Belongs to the P-Pant transferase superfamily. AcpS family. Requires Mg(2+) as cofactor.

The protein localises to the cytoplasm. The enzyme catalyses apo-[ACP] + CoA = holo-[ACP] + adenosine 3',5'-bisphosphate + H(+). Its function is as follows. Transfers the 4'-phosphopantetheine moiety from coenzyme A to a Ser of acyl-carrier-protein. The chain is Holo-[acyl-carrier-protein] synthase from Rickettsia rickettsii (strain Iowa).